The chain runs to 257 residues: Deoxyribose-phosphate aldolase (257 aa).

Catalysis depends on Asp102, which acts as the Proton donor/acceptor. The Schiff-base intermediate with acetaldehyde role is filled by Lys166. The active-site Proton donor/acceptor is Lys198.

It belongs to the DeoC/FbaB aldolase family. DeoC type 2 subfamily.

The protein resides in the cytoplasm. The enzyme catalyses 2-deoxy-D-ribose 5-phosphate = D-glyceraldehyde 3-phosphate + acetaldehyde. Its pathway is carbohydrate degradation; 2-deoxy-D-ribose 1-phosphate degradation; D-glyceraldehyde 3-phosphate and acetaldehyde from 2-deoxy-alpha-D-ribose 1-phosphate: step 2/2. Its function is as follows. Catalyzes a reversible aldol reaction between acetaldehyde and D-glyceraldehyde 3-phosphate to generate 2-deoxy-D-ribose 5-phosphate. The chain is Deoxyribose-phosphate aldolase from Shewanella piezotolerans (strain WP3 / JCM 13877).